Reading from the N-terminus, the 262-residue chain is Indole-3-glycerol phosphate synthase (262 aa).

This sequence belongs to the TrpC family.

It carries out the reaction 1-(2-carboxyphenylamino)-1-deoxy-D-ribulose 5-phosphate + H(+) = (1S,2R)-1-C-(indol-3-yl)glycerol 3-phosphate + CO2 + H2O. Its pathway is amino-acid biosynthesis; L-tryptophan biosynthesis; L-tryptophan from chorismate: step 4/5. The sequence is that of Indole-3-glycerol phosphate synthase from Chlorobium luteolum (strain DSM 273 / BCRC 81028 / 2530) (Pelodictyon luteolum).